Reading from the N-terminus, the 198-residue chain is Probable nicotinate-nucleotide adenylyltransferase (198 aa).

Belongs to the NadD family.

It catalyses the reaction nicotinate beta-D-ribonucleotide + ATP + H(+) = deamido-NAD(+) + diphosphate. Its pathway is cofactor biosynthesis; NAD(+) biosynthesis; deamido-NAD(+) from nicotinate D-ribonucleotide: step 1/1. Its function is as follows. Catalyzes the reversible adenylation of nicotinate mononucleotide (NaMN) to nicotinic acid adenine dinucleotide (NaAD). This chain is Probable nicotinate-nucleotide adenylyltransferase, found in Chlorobium limicola (strain DSM 245 / NBRC 103803 / 6330).